The sequence spans 777 residues: E3 UFM1-protein ligase 1 homolog (777 aa).

Residues methionine 396 to glutamate 417 show a composition bias toward basic and acidic residues. The tract at residues methionine 396 to aspartate 470 is disordered.

The protein belongs to the UFL1 family.

E3 UFM1-protein ligase that mediates ufmylation of target proteins. This is E3 UFM1-protein ligase 1 homolog from Aedes aegypti (Yellowfever mosquito).